Reading from the N-terminus, the 219-residue chain is Orotate phosphoribosyltransferase (219 aa).

Lysine 26 provides a ligand contact to 5-phospho-alpha-D-ribose 1-diphosphate. Residue 34-35 participates in orotate binding; that stretch reads FF. Residues 72 to 73, arginine 98, lysine 99, lysine 102, histidine 104, and 124 to 132 each bind 5-phospho-alpha-D-ribose 1-diphosphate; these read YK and DDVITAGTA. Residues threonine 128 and arginine 156 each contribute to the orotate site.

It belongs to the purine/pyrimidine phosphoribosyltransferase family. PyrE subfamily. In terms of assembly, homodimer. The cofactor is Mg(2+).

It carries out the reaction orotidine 5'-phosphate + diphosphate = orotate + 5-phospho-alpha-D-ribose 1-diphosphate. The protein operates within pyrimidine metabolism; UMP biosynthesis via de novo pathway; UMP from orotate: step 1/2. In terms of biological role, catalyzes the transfer of a ribosyl phosphate group from 5-phosphoribose 1-diphosphate to orotate, leading to the formation of orotidine monophosphate (OMP). In Xylella fastidiosa (strain Temecula1 / ATCC 700964), this protein is Orotate phosphoribosyltransferase.